The chain runs to 154 residues: Transcriptional repressor NrdR (154 aa).

A zinc finger spans residues 3–34; the sequence is CPFCRHSDSRVIDSRETDEGQAIRRRRSCPEC. Positions 46–136 constitute an ATP-cone domain; it reads VAVVKRSGVT…VYRSFSSADD (91 aa).

Belongs to the NrdR family. Requires Zn(2+) as cofactor.

Negatively regulates transcription of bacterial ribonucleotide reductase nrd genes and operons by binding to NrdR-boxes. The sequence is that of Transcriptional repressor NrdR from Mycobacterium leprae (strain Br4923).